Reading from the N-terminus, the 538-residue chain is T-complex protein 1 subunit epsilon (538 aa).

It belongs to the TCP-1 chaperonin family. In terms of assembly, heterooligomeric complex of about 850 to 900 kDa that forms two stacked rings, 12 to 16 nm in diameter.

It localises to the cytoplasm. Its function is as follows. Molecular chaperone; assists the folding of proteins upon ATP hydrolysis. Known to play a role, in vitro, in the folding of actin and tubulin. The protein is T-complex protein 1 subunit epsilon (cct5) of Dictyostelium discoideum (Social amoeba).